A 536-amino-acid chain; its full sequence is Membrane protein insertase YidC (536 aa).

Transmembrane regions (helical) follow at residues L7–F27, F332–V352, M411–F431, L449–L469, and F488–W508.

It belongs to the OXA1/ALB3/YidC family. Type 1 subfamily. As to quaternary structure, interacts with the Sec translocase complex via SecD. Specifically interacts with transmembrane segments of nascent integral membrane proteins during membrane integration.

It is found in the cell inner membrane. Required for the insertion and/or proper folding and/or complex formation of integral membrane proteins into the membrane. Involved in integration of membrane proteins that insert both dependently and independently of the Sec translocase complex, as well as at least some lipoproteins. Aids folding of multispanning membrane proteins. This chain is Membrane protein insertase YidC, found in Haemophilus ducreyi (strain 35000HP / ATCC 700724).